The primary structure comprises 173 residues: 3-isopropylmalate dehydratase small subunit (173 aa).

It belongs to the LeuD family. LeuD type 2 subfamily. In terms of assembly, heterodimer of LeuC and LeuD.

The catalysed reaction is (2R,3S)-3-isopropylmalate = (2S)-2-isopropylmalate. It participates in amino-acid biosynthesis; L-leucine biosynthesis; L-leucine from 3-methyl-2-oxobutanoate: step 2/4. In terms of biological role, catalyzes the isomerization between 2-isopropylmalate and 3-isopropylmalate, via the formation of 2-isopropylmaleate. The protein is 3-isopropylmalate dehydratase small subunit of Caldicellulosiruptor saccharolyticus (strain ATCC 43494 / DSM 8903 / Tp8T 6331).